The chain runs to 282 residues: Shikimate dehydrogenase (NADP(+)) (282 aa).

Residues 16–18 (SLS) and Thr63 each bind shikimate. Lys67 serves as the catalytic Proton acceptor. Residues Asn88 and Asp103 each contribute to the shikimate site. NADP(+)-binding positions include 128-132 (GAGGA) and Gly243.

Belongs to the shikimate dehydrogenase family. Homodimer.

It catalyses the reaction shikimate + NADP(+) = 3-dehydroshikimate + NADPH + H(+). It functions in the pathway metabolic intermediate biosynthesis; chorismate biosynthesis; chorismate from D-erythrose 4-phosphate and phosphoenolpyruvate: step 4/7. Functionally, involved in the biosynthesis of the chorismate, which leads to the biosynthesis of aromatic amino acids. Catalyzes the reversible NADPH linked reduction of 3-dehydroshikimate (DHSA) to yield shikimate (SA). The protein is Shikimate dehydrogenase (NADP(+)) of Xylella fastidiosa (strain 9a5c).